A 243-amino-acid polypeptide reads, in one-letter code: Uroporphyrinogen-III C-methyltransferase (243 aa).

Residues P12, 88 to 90 (SGD), 118 to 119 (ST), M166, and A195 each bind S-adenosyl-L-homocysteine.

The protein belongs to the precorrin methyltransferase family.

It carries out the reaction uroporphyrinogen III + 2 S-adenosyl-L-methionine = precorrin-2 + 2 S-adenosyl-L-homocysteine + H(+). It functions in the pathway cofactor biosynthesis; adenosylcobalamin biosynthesis; precorrin-2 from uroporphyrinogen III: step 1/1. It participates in porphyrin-containing compound metabolism; siroheme biosynthesis; precorrin-2 from uroporphyrinogen III: step 1/1. Catalyzes the two successive C-2 and C-7 methylation reactions involved in the conversion of uroporphyrinogen III to precorrin-2 via the intermediate formation of precorrin-1. It is a step in the biosynthesis of both cobalamin (vitamin B12) and siroheme. The polypeptide is Uroporphyrinogen-III C-methyltransferase (Synechococcus elongatus (strain ATCC 33912 / PCC 7942 / FACHB-805) (Anacystis nidulans R2)).